A 442-amino-acid polypeptide reads, in one-letter code: tRNA-2-methylthio-N(6)-dimethylallyladenosine synthase (442 aa).

Residues 2-117 (KSLYIKTYGC…LPELIVKASR (116 aa)) form the MTTase N-terminal domain. The [4Fe-4S] cluster site is built by cysteine 11, cysteine 47, cysteine 80, cysteine 157, cysteine 161, and cysteine 164. A Radical SAM core domain is found at 143–374 (NSQGSSAFLS…QKLINKQQLE (232 aa)). The 65-residue stretch at 377-441 (QSMVGKTIPV…QNSLLGRELQ (65 aa)) folds into the TRAM domain.

It belongs to the methylthiotransferase family. MiaB subfamily. Monomer. The cofactor is [4Fe-4S] cluster.

The protein localises to the cytoplasm. The enzyme catalyses N(6)-dimethylallyladenosine(37) in tRNA + (sulfur carrier)-SH + AH2 + 2 S-adenosyl-L-methionine = 2-methylsulfanyl-N(6)-dimethylallyladenosine(37) in tRNA + (sulfur carrier)-H + 5'-deoxyadenosine + L-methionine + A + S-adenosyl-L-homocysteine + 2 H(+). Functionally, catalyzes the methylthiolation of N6-(dimethylallyl)adenosine (i(6)A), leading to the formation of 2-methylthio-N6-(dimethylallyl)adenosine (ms(2)i(6)A) at position 37 in tRNAs that read codons beginning with uridine. The sequence is that of tRNA-2-methylthio-N(6)-dimethylallyladenosine synthase from Wolbachia sp. subsp. Brugia malayi (strain TRS).